We begin with the raw amino-acid sequence, 285 residues long: Small ribosomal subunit protein uS2 (285 aa).

The disordered stretch occupies residues 231 to 285 (GGKSGQAAAEPMAEWERELLEQHNAQQAEQAEAPAAEAPAEPAEAPAAEAAPQGE). The span at 255 to 285 (AQQAEQAEAPAAEAPAEPAEAPAAEAAPQGE) shows a compositional bias: low complexity.

Belongs to the universal ribosomal protein uS2 family.

This chain is Small ribosomal subunit protein uS2, found in Micrococcus luteus (strain ATCC 4698 / DSM 20030 / JCM 1464 / CCM 169 / CCUG 5858 / IAM 1056 / NBRC 3333 / NCIMB 9278 / NCTC 2665 / VKM Ac-2230) (Micrococcus lysodeikticus).